The primary structure comprises 204 residues: ATP-dependent Clp protease proteolytic subunit (204 aa).

Catalysis depends on serine 102, which acts as the Nucleophile. Residue histidine 127 is part of the active site.

It belongs to the peptidase S14 family. Fourteen ClpP subunits assemble into 2 heptameric rings which stack back to back to give a disk-like structure with a central cavity, resembling the structure of eukaryotic proteasomes.

The protein localises to the cytoplasm. It catalyses the reaction Hydrolysis of proteins to small peptides in the presence of ATP and magnesium. alpha-casein is the usual test substrate. In the absence of ATP, only oligopeptides shorter than five residues are hydrolyzed (such as succinyl-Leu-Tyr-|-NHMec, and Leu-Tyr-Leu-|-Tyr-Trp, in which cleavage of the -Tyr-|-Leu- and -Tyr-|-Trp bonds also occurs).. Cleaves peptides in various proteins in a process that requires ATP hydrolysis. Has a chymotrypsin-like activity. Plays a major role in the degradation of misfolded proteins. In Neisseria meningitidis serogroup C (strain 053442), this protein is ATP-dependent Clp protease proteolytic subunit.